A 165-amino-acid chain; its full sequence is Lipoprotein signal peptidase (165 aa).

4 helical membrane-spanning segments follow: residues 7–27 (YFSSSSSMLPWLGIAAVLVLL), 46–66 (AVTSFFNLVLVYNKGAAFSFL), 72–92 (WQRYFFTIMGIGAAIFIIYLL), and 100–120 (LFCWALALILGGAIGNVIDRV). Residues Asp127 and Asp145 contribute to the active site. Residues 136-156 (WHWPAFNIADSAICIGAVLFI) form a helical membrane-spanning segment.

Belongs to the peptidase A8 family.

The protein resides in the cell inner membrane. The catalysed reaction is Release of signal peptides from bacterial membrane prolipoproteins. Hydrolyzes -Xaa-Yaa-Zaa-|-(S,diacylglyceryl)Cys-, in which Xaa is hydrophobic (preferably Leu), and Yaa (Ala or Ser) and Zaa (Gly or Ala) have small, neutral side chains.. It functions in the pathway protein modification; lipoprotein biosynthesis (signal peptide cleavage). Functionally, this protein specifically catalyzes the removal of signal peptides from prolipoproteins. This is Lipoprotein signal peptidase from Janthinobacterium sp. (strain Marseille) (Minibacterium massiliensis).